The following is a 465-amino-acid chain: Sorting nexin-8 (465 aa).

Positions 1–19 are enriched in low complexity; it reads MTGRAMDPLPAAAVGAAAE. The disordered stretch occupies residues 1–36; it reads MTGRAMDPLPAAAVGAAAEAEADEEADPPASDLPTP. Residues 73 to 181 form the PX domain; sequence ARDTVQVELI…KLFLSFSGSD (109 aa). Residues R109, K135, and R148 each contribute to the a 1,2-diacyl-sn-glycero-3-phospho-(1D-myo-inositol-3-phosphate) site. The residue at position 452 (T452) is a Phosphothreonine. A Phosphoserine modification is found at S456.

The protein belongs to the sorting nexin family.

Its subcellular location is the early endosome membrane. May be involved in several stages of intracellular trafficking. May play a role in intracellular protein transport from early endosomes to the trans-Golgi network. This Homo sapiens (Human) protein is Sorting nexin-8 (SNX8).